We begin with the raw amino-acid sequence, 345 residues long: Methylthioribose-1-phosphate isomerase (345 aa).

Substrate contacts are provided by residues 47 to 49 (RGA), arginine 90, and glutamine 199. Catalysis depends on aspartate 240, which acts as the Proton donor. 250–251 (NK) lines the substrate pocket.

Belongs to the eIF-2B alpha/beta/delta subunits family. MtnA subfamily.

It carries out the reaction 5-(methylsulfanyl)-alpha-D-ribose 1-phosphate = 5-(methylsulfanyl)-D-ribulose 1-phosphate. The protein operates within amino-acid biosynthesis; L-methionine biosynthesis via salvage pathway; L-methionine from S-methyl-5-thio-alpha-D-ribose 1-phosphate: step 1/6. In terms of biological role, catalyzes the interconversion of methylthioribose-1-phosphate (MTR-1-P) into methylthioribulose-1-phosphate (MTRu-1-P). In Crocosphaera subtropica (strain ATCC 51142 / BH68) (Cyanothece sp. (strain ATCC 51142)), this protein is Methylthioribose-1-phosphate isomerase.